The chain runs to 137 residues: Ribosome-binding factor A (137 aa).

The protein belongs to the RbfA family. As to quaternary structure, monomer. Binds 30S ribosomal subunits, but not 50S ribosomal subunits or 70S ribosomes.

The protein localises to the cytoplasm. Functionally, one of several proteins that assist in the late maturation steps of the functional core of the 30S ribosomal subunit. Associates with free 30S ribosomal subunits (but not with 30S subunits that are part of 70S ribosomes or polysomes). Required for efficient processing of 16S rRNA. May interact with the 5'-terminal helix region of 16S rRNA. This is Ribosome-binding factor A from Nitrobacter hamburgensis (strain DSM 10229 / NCIMB 13809 / X14).